Consider the following 290-residue polypeptide: Protease HtpX (290 aa).

2 helical membrane-spanning segments follow: residues 6-26 (LFLV…NILF) and 36-56 (ISGL…ISLL). His143 is a binding site for Zn(2+). Glu144 is an active-site residue. His147 is a binding site for Zn(2+). 2 consecutive transmembrane segments (helical) span residues 158–178 (LIQG…AGVI) and 200–220 (ITVF…VMWF). Glu225 provides a ligand contact to Zn(2+).

It belongs to the peptidase M48B family. The cofactor is Zn(2+).

It is found in the cell inner membrane. The sequence is that of Protease HtpX from Aeromonas hydrophila subsp. hydrophila (strain ATCC 7966 / DSM 30187 / BCRC 13018 / CCUG 14551 / JCM 1027 / KCTC 2358 / NCIMB 9240 / NCTC 8049).